We begin with the raw amino-acid sequence, 156 residues long: Cyanate hydratase (156 aa).

Catalysis depends on residues Arg-96, Glu-99, and Ser-122.

It belongs to the cyanase family.

It carries out the reaction cyanate + hydrogencarbonate + 3 H(+) = NH4(+) + 2 CO2. Functionally, catalyzes the reaction of cyanate with bicarbonate to produce ammonia and carbon dioxide. The sequence is that of Cyanate hydratase from Mycobacteroides abscessus (strain ATCC 19977 / DSM 44196 / CCUG 20993 / CIP 104536 / JCM 13569 / NCTC 13031 / TMC 1543 / L948) (Mycobacterium abscessus).